The primary structure comprises 260 residues: Tryptophan 2,3-dioxygenase (260 aa).

Substrate contacts are provided by residues 34 to 38 (FIVIH) and R100. Residue H219 participates in heme binding. T233 serves as a coordination point for substrate.

Belongs to the tryptophan 2,3-dioxygenase family. Homotetramer. Requires heme as cofactor.

The enzyme catalyses L-tryptophan + O2 = N-formyl-L-kynurenine. It functions in the pathway amino-acid degradation; L-tryptophan degradation via kynurenine pathway; L-kynurenine from L-tryptophan: step 1/2. Its function is as follows. Heme-dependent dioxygenase that catalyzes the oxidative cleavage of the L-tryptophan (L-Trp) pyrrole ring and converts L-tryptophan to N-formyl-L-kynurenine. Catalyzes the oxidative cleavage of the indole moiety. The sequence is that of Tryptophan 2,3-dioxygenase from Herpetosiphon aurantiacus (strain ATCC 23779 / DSM 785 / 114-95).